Reading from the N-terminus, the 616-residue chain is Hemagglutinin-neuraminidase (616 aa).

At Met1 to Arg26 the chain is on the intravirion side. A helical membrane pass occupies residues Ile27 to Ser47. Residues Met48–Pro616 are Virion surface-facing. N-linked (GlcNAc...) asparagine; by host glycosylation is present at Asn119. The tract at residues Gly124–Tyr152 is important for interaction with fusion/F protein. 3 disulfides stabilise this stretch: Cys172–Cys196, Cys186–Cys247, and Cys238–Cys251. The tract at residues Asn234–Ser239 is involved in neuraminidase activity. N-linked (GlcNAc...) asparagine; by host glycans are attached at residues Asn341 and Asn433. 2 disulfides stabilise this stretch: Cys344-Cys461 and Cys455-Cys465. N-linked (GlcNAc...) asparagine; by host glycans are attached at residues Asn481, Asn538, and Asn600. Cys531 and Cys542 are oxidised to a cystine.

The protein belongs to the paramyxoviruses hemagglutinin-neuraminidase family. In terms of assembly, homotetramer; composed of disulfide-linked homodimers. Interacts with F protein trimer. Interacts with host CG-1B; this interaction inhibits viral adsorption and replication rather than internalization.

Its subcellular location is the virion membrane. It is found in the host cell membrane. It carries out the reaction Hydrolysis of alpha-(2-&gt;3)-, alpha-(2-&gt;6)-, alpha-(2-&gt;8)- glycosidic linkages of terminal sialic acid residues in oligosaccharides, glycoproteins, glycolipids, colominic acid and synthetic substrates.. Mediates the viral entry into the host cell together with fusion/F protein. Attaches the virus to sialic acid-containing cell receptors and thereby initiates infection. Binding of HN protein to the receptor induces a conformational change that allows the F protein to trigger virion/cell membranes fusion. Functionally, neuraminidase activity ensures the efficient spread of the virus by dissociating the mature virions from the neuraminic acid containing glycoproteins. In Gallus gallus (Chicken), this protein is Hemagglutinin-neuraminidase (HN).